A 196-amino-acid chain; its full sequence is Probable GTP-binding protein EngB (196 aa).

In terms of domain architecture, EngB-type G spans 22 to 195 (NIPEIALVGR…WQWIEERMGK (174 aa)). GTP is bound by residues 30–37 (GRSNVGKS), 57–61 (GKTQT), 75–78 (DVPG), 142–145 (TKID), and 174–176 (FSA). Residues serine 37 and threonine 59 each coordinate Mg(2+).

This sequence belongs to the TRAFAC class TrmE-Era-EngA-EngB-Septin-like GTPase superfamily. EngB GTPase family. Mg(2+) is required as a cofactor.

Functionally, necessary for normal cell division and for the maintenance of normal septation. The polypeptide is Probable GTP-binding protein EngB (Limosilactobacillus reuteri (strain DSM 20016) (Lactobacillus reuteri)).